A 420-amino-acid polypeptide reads, in one-letter code: Carbohydrate sulfotransferase 1 (420 aa).

Position 1 (Met-1) is a topological domain, cytoplasmic. The helical; Signal-anchor for type II membrane protein transmembrane segment at 2–23 threads the bilayer; the sequence is QCSWKAVILLALVSIAIQYTAI. Topologically, residues 24-420 are lumenal; the sequence is RTFTAKPFHI…IEDKTFIPFL (397 aa). Asn-64 carries N-linked (GlcNAc...) asparagine glycosylation. Residue 77-83 coordinates 3'-phosphoadenylyl sulfate; that stretch reads TRSGSSF. N-linked (GlcNAc...) asparagine glycosylation is found at Asn-153 and Asn-197. 242 to 250 is a 3'-phosphoadenylyl sulfate binding site; the sequence is RDPRGILSS. N-linked (GlcNAc...) asparagine glycans are attached at residues Asn-342 and Asn-405.

This sequence belongs to the sulfotransferase 1 family. Gal/GlcNAc/GalNAc subfamily.

The protein localises to the golgi apparatus membrane. It catalyses the reaction 3'-phosphoadenylyl sulfate + keratan = adenosine 3',5'-bisphosphate + keratan 6'-sulfate.. In terms of biological role, sulfotransferase that utilizes 3'-phospho-5'-adenylyl sulfate (PAPS) as sulfonate donor to catalyze the transfer of sulfate to position 6 of galactose (Gal) residues of keratan. This chain is Carbohydrate sulfotransferase 1 (chst1), found in Danio rerio (Zebrafish).